Here is a 334-residue protein sequence, read N- to C-terminus: MSLDIDQIALHQLIKRDEQTLDVVLRDSLLPTNAVVEEMMAELHRVYSAKSKAYGLFNEQSELADALKRSRKGDEDFLSFSRAATGRLRDELAKYPFAEGGVVLFCQYRYLAVEYLLISVLSSCHSMRVNEQLDLSTTHYLDINRADIVARIDLTEWETNPESTRYLTFLKGRVGRKVSDFFMDFLSAAEGLDTKAQNRGLLQAVDDYCADAELGKNERQAYRQQVYSYCNEQLQAGEEIALQVLAQELPKLGEKDFQQFSAEQGYALEESFPADRGTLRQLTKFAGSGGGLSINFDALLLDERIFWDAATDTLTIKGTPPNLRDQLQRRAGSK.

It belongs to the YejK family.

Its subcellular location is the cytoplasm. It is found in the nucleoid. In Yersinia pseudotuberculosis serotype O:1b (strain IP 31758), this protein is Nucleoid-associated protein YpsIP31758_2721.